The chain runs to 313 residues: Porphobilinogen deaminase (313 aa).

S-(dipyrrolylmethanemethyl)cysteine is present on Cys-242.

Belongs to the HMBS family. As to quaternary structure, monomer. Requires dipyrromethane as cofactor.

It catalyses the reaction 4 porphobilinogen + H2O = hydroxymethylbilane + 4 NH4(+). It participates in porphyrin-containing compound metabolism; protoporphyrin-IX biosynthesis; coproporphyrinogen-III from 5-aminolevulinate: step 2/4. Its function is as follows. Tetrapolymerization of the monopyrrole PBG into the hydroxymethylbilane pre-uroporphyrinogen in several discrete steps. The protein is Porphobilinogen deaminase of Enterobacter sp. (strain 638).